Reading from the N-terminus, the 461-residue chain is Peptidyl-prolyl cis-trans isomerase-like 4 (461 aa).

In terms of domain architecture, PPIase cyclophilin-type spans 1-171 (MSVLLETSLG…KDIRIRHTVI (171 aa)). Residues 248 to 326 (NVLFVCKLNP…HRIHVDFSQS (79 aa)) form the RRM domain. A disordered region spans residues 372–461 (NYNMVFDKND…DDRYRDRRRR (90 aa)). Composition is skewed to basic and acidic residues over residues 378–392 (DKNDNRRSAPRERSY) and 400–461 (NYRD…RRRR).

Belongs to the cyclophilin-type PPIase family. PPIL4 subfamily.

It localises to the nucleus. The catalysed reaction is [protein]-peptidylproline (omega=180) = [protein]-peptidylproline (omega=0). PPIases accelerate the folding of proteins. It catalyzes the cis-trans isomerization of proline imidic peptide bonds in oligopeptides. In Emericella nidulans (strain FGSC A4 / ATCC 38163 / CBS 112.46 / NRRL 194 / M139) (Aspergillus nidulans), this protein is Peptidyl-prolyl cis-trans isomerase-like 4 (cyp6).